The primary structure comprises 141 residues: Anthrone oxygenase ptaC (141 aa).

An N-terminal signal peptide occupies residues 1–19 (MMGLPLMAVPMLLDTGADP). 2 consecutive transmembrane segments (helical) span residues 33-53 (GVRT…WTII) and 64-84 (ILAV…YVLA).

It belongs to the anthrone oxygenase family.

It is found in the membrane. The protein operates within secondary metabolite biosynthesis. Anthrone oxygenase; part of the gene cluster that mediates the biosynthesis of pestheic acid, a diphenyl ether which is a biosynthetic precursor of the unique chloropupukeananes. The biosynthesis initiates from condensation of acetate and malonate units catalyzed by the non-reducing PKS ptaA. As the ptaA protein is TE/CLC domain-deficient, hydrolysis and Claisen cyclization of the polyketide could be catalyzed by ptaB containing a beta-lactamase domain. The ptaB protein might hydrolyze the thioester bond between the ACP of ptaA and the intermediate to release atrochrysone carboxylic acid, which is spontaneously dehydrated to form endocrocin anthrone. Endocrocin anthrone is then converted to endocrocin, catalyzed by the anthrone oxygenase ptaC. Spontaneous decarboxylation of endocrocin occurs to generate emodin. An O-methyltransferase (ptaH or ptaI) could methylate emodin to form physcion. PtaJ could then catalyze the oxidative cleavage of physcion, and rotation of the intermediate could then afford desmethylisosulochrin. PtaF, a putative NADH-dependent oxidoreductase, might also participate in the oxidative cleavage step. Desmethylisosulochrin is then transformed by another O-methyltransferase (ptaH or ptaI) to form isosulochrin. Chlorination of isosulochrin by ptaM in the cyclohexadienone B ring then produces chloroisosulochrin. PtaE is responsible for the oxidative coupling reactions of both benzophenones isosulochrin and chloroisosulochrin to RES-1214-1 and pestheic acid respectively, regardless of chlorination. The chain is Anthrone oxygenase ptaC from Pestalotiopsis fici (strain W106-1 / CGMCC3.15140).